Consider the following 221-residue polypeptide: Large ribosomal subunit protein uL3 (221 aa).

The protein belongs to the universal ribosomal protein uL3 family. As to quaternary structure, part of the 50S ribosomal subunit. Forms a cluster with proteins L14 and L19.

One of the primary rRNA binding proteins, it binds directly near the 3'-end of the 23S rRNA, where it nucleates assembly of the 50S subunit. The protein is Large ribosomal subunit protein uL3 of Chlamydia abortus (strain DSM 27085 / S26/3) (Chlamydophila abortus).